We begin with the raw amino-acid sequence, 479 residues long: Serralysin C (479 aa).

Positions 1–17 (MGKNLSLRQDDAQHALS) are excised as a propeptide. Histidine 188 contacts Zn(2+). The active site involves glutamate 189. Zn(2+) contacts are provided by histidine 192 and tyrosine 228. 31 residues coordinate Ca(2+): arginine 265, glycine 267, aspartate 297, glycine 299, glycine 300, aspartate 302, threonine 339, glutamate 341, glycine 346, glycine 348, aspartate 350, asparagine 355, alanine 357, asparagine 359, glycine 363, glycine 364, alanine 365, glycine 366, aspartate 368, glycine 372, glycine 373, glycine 375, aspartate 377, glycine 381, glycine 382, alanine 383, glycine 384, aspartate 386, aspartate 395, aspartate 402, and aspartate 412. Hemolysin-type calcium-binding repeat units lie at residues 344–361 (IGGS…DNIL), 362–379 (QGGA…ADTL), and 380–397 (YGGA…QDST).

This sequence belongs to the peptidase M10B family. The cofactor is Ca(2+). It depends on Zn(2+) as a cofactor.

It is found in the secreted. It catalyses the reaction Preferential cleavage of bonds with hydrophobic residues in P1'.. The chain is Serralysin C (prtC) from Dickeya chrysanthemi (Pectobacterium chrysanthemi).